We begin with the raw amino-acid sequence, 404 residues long: Argininosuccinate synthase (404 aa).

Residues 10-18 (AFSGGLDTS) and Ala37 each bind ATP. Positions 88 and 93 each coordinate L-citrulline. Residue Gly118 coordinates ATP. L-aspartate contacts are provided by Thr120, Asn124, and Asp125. L-citrulline is bound at residue Asn124. Residues Arg128, Ser179, Ser188, Glu264, and Tyr276 each coordinate L-citrulline.

This sequence belongs to the argininosuccinate synthase family. Type 1 subfamily. Homotetramer.

The protein resides in the cytoplasm. The enzyme catalyses L-citrulline + L-aspartate + ATP = 2-(N(omega)-L-arginino)succinate + AMP + diphosphate + H(+). Its pathway is amino-acid biosynthesis; L-arginine biosynthesis; L-arginine from L-ornithine and carbamoyl phosphate: step 2/3. The sequence is that of Argininosuccinate synthase from Nitrosomonas eutropha (strain DSM 101675 / C91 / Nm57).